The sequence spans 449 residues: uncharacterized protein (449 aa).

13 helical membrane passes run 1–21 (MVANLPALFSLGVFVGVILLI), 26–46 (IHLTIAAFLGALILVFTHVIT), 51–71 (IDYISQSYATLALFFGVMVLV), 97–117 (LLMLGVIAITTPICAVLPNAT), 137–157 (FVPILILMVFVANSAGLLTLV), 178–198 (FKLSFMGVLAIVSIVVITPFL), 223–243 (VLMAGGVIITLVLIFFVIGES), 244–264 (LPVPIPPASVALMGACLALLL), 285–305 (LIFFMSIFVIIGSLEKTGVTA), 310–330 (LLAVVVGQNIAFGAIVLVFTV), 340–360 (IPLVVAMVPLLKQYVVNIGFA), 377–397 (VLPLFYAMMFGATLGGNGTLV), and 425–445 (GLPVMAVQLVVAALFVAWLMF).

The protein belongs to the CitM (TC 2.A.11) transporter family.

It localises to the cell membrane. This is an uncharacterized protein from Synechocystis sp. (strain ATCC 27184 / PCC 6803 / Kazusa).